We begin with the raw amino-acid sequence, 555 residues long: NADH-ubiquinone oxidoreductase chain 5 (555 aa).

The next 15 helical transmembrane spans lie at leucine 37–isoleucine 57, phenylalanine 69–tyrosine 89, isoleucine 90–tryptophan 110, phenylalanine 133–leucine 153, leucine 155–alanine 175, threonine 197–valine 217, leucine 230–valine 250, valine 257–isoleucine 275, cysteine 287–isoleucine 307, leucine 323–leucine 343, isoleucine 366–leucine 388, glutamate 406–phenylalanine 426, tryptophan 454–isoleucine 474, isoleucine 494–asparagine 516, and arginine 534–tyrosine 554.

It belongs to the complex I subunit 5 family.

It is found in the mitochondrion inner membrane. The catalysed reaction is a ubiquinone + NADH + 5 H(+)(in) = a ubiquinol + NAD(+) + 4 H(+)(out). In terms of biological role, core subunit of the mitochondrial membrane respiratory chain NADH dehydrogenase (Complex I) that is believed to belong to the minimal assembly required for catalysis. Complex I functions in the transfer of electrons from NADH to the respiratory chain. The immediate electron acceptor for the enzyme is believed to be ubiquinone. The sequence is that of NADH-ubiquinone oxidoreductase chain 5 (ND5) from Candida parapsilosis (Yeast).